The chain runs to 504 residues: Cytochrome P450 71B4 (504 aa).

The chain crosses the membrane as a helical span at residues 1–21 (MVSLLSFFLLLLVPIFFLLIF). Residue cysteine 446 coordinates heme.

It belongs to the cytochrome P450 family. Requires heme as cofactor.

Its subcellular location is the membrane. In Arabidopsis thaliana (Mouse-ear cress), this protein is Cytochrome P450 71B4 (CYP71B4).